The chain runs to 479 residues: Glycogen synthase (479 aa).

Residue Lys15 coordinates ADP-alpha-D-glucose.

The protein belongs to the glycosyltransferase 1 family. Bacterial/plant glycogen synthase subfamily.

The catalysed reaction is [(1-&gt;4)-alpha-D-glucosyl](n) + ADP-alpha-D-glucose = [(1-&gt;4)-alpha-D-glucosyl](n+1) + ADP + H(+). It participates in glycan biosynthesis; glycogen biosynthesis. Functionally, synthesizes alpha-1,4-glucan chains using ADP-glucose. This chain is Glycogen synthase, found in Clostridium beijerinckii (strain ATCC 51743 / NCIMB 8052) (Clostridium acetobutylicum).